A 174-amino-acid chain; its full sequence is Regenerating islet-derived protein 3-gamma (174 aa).

The first 26 residues, 1 to 26 (MLPRITITIMSWMLLSCLMLLSQVQG), serve as a signal peptide directing secretion. The propeptide occupies 27-37 (EVAKKDAPSSR). 3 cysteine pairs are disulfide-bonded: C40–C51, C68–C170, and C145–C162. The C-type lectin domain occupies 47–171 (YGSYCYALFS…CNLELPYVCK (125 aa)). A sufficient to activate EXTL3 region spans residues 103 to 118 (WIGLHDPTLGYEPNRG). Position 107 (H107) interacts with Zn(2+). The EPN motif lies at 114–116 (EPN). 2 residues coordinate Zn(2+): E121 and H144.

As to quaternary structure, forms a hexameric membrane-permeabilizing oligomeric pore on membrane phospholipids. The hexamer is formed by three dimers related by helical symmetry. Forms filaments, filamentation traps pore complexes and limits damage to host cells. Interacts with EXTL3. Proteolytic processing by trypsin removes an inhibitory N-terminal propeptide and is essential for peptidoglycan binding and antibacterial activity. Predominantly expressed in the small intestine, including Paneth cells (at protein level). Hardly detectable in the colon (at protein level). Highly expressed in the lung epithelium during methicillin-resistant S.aureus infection and allergic airway inflammation (at protein level). Skin injury increases its epidermal expression. Also expressed in the pancreas. Expressed by nocireceptors.

It localises to the secreted. The protein localises to the cytoplasm. With respect to regulation, lipopolysaccharide inhibits pore-forming activity, explaining why is bactericidal for Gram-positive but not Gram-negative bacteria. Functionally, bactericidal C-type lectin which acts exclusively against Gram-positive bacteria and mediates bacterial killing by binding to surface-exposed carbohydrate moieties of peptidoglycan. Restricts bacterial colonization of the intestinal epithelial surface and consequently limits activation of adaptive immune responses by the microbiota. Its function is as follows. Acts as a hormone in response to different stimuli like anti-inflammatory signals, such as IL17A, or gut microbiome. Is secreted by different cell types to activate its receptor EXTL3 and induce cell specific signaling pathways. Induced by IL17A in keratinocytes, regulates keratinocyte proliferation and differentiation after skin injury. In parallel, inhibits skin inflammation through the inhibition of inflammatory cytokines such as IL6 and TNF. Induced by IL22 in lung epithelial cells, inhibits cytokine production and regulates allergic airway inflammation. Induced in small intestine by inulin-enriched diet and Lactobacillus gasseri enriched microbiome, plays a role in the improvement of gut barrier function, the regulation of energy balance and glucose levels. Modulates microbiota composition in duodenal contents. Produced by nociceptor in response to endotoxins, prevents endotoxic death by targeting kynurenine pathway in microglia. Has bacteriostatic activity. In terms of biological role, has bactericidal activity against L.monocytogenes and methicillin-resistant S.aureus. The chain is Regenerating islet-derived protein 3-gamma from Mus musculus (Mouse).